The chain runs to 291 residues: Glycine--tRNA ligase alpha subunit (291 aa).

Belongs to the class-II aminoacyl-tRNA synthetase family. In terms of assembly, tetramer of two alpha and two beta subunits.

It is found in the cytoplasm. It carries out the reaction tRNA(Gly) + glycine + ATP = glycyl-tRNA(Gly) + AMP + diphosphate. This chain is Glycine--tRNA ligase alpha subunit, found in Geobacter metallireducens (strain ATCC 53774 / DSM 7210 / GS-15).